A 614-amino-acid polypeptide reads, in one-letter code: Subtilin transport ATP-binding protein SpaT (614 aa).

The next 5 helical transmembrane spans lie at 34–54 (FLKLIRFSIITGILPIVSLYI), 69–89 (VSIVITIFLTYLGVSFFSELI), 147–167 (IIQAIITMTTSFVTLLSSIAF), 175–195 (VSLLLLVIPVISLFYFLKIGQ), and 267–287 (IAVQLVGAVIIFIAIMSAFAG). An ABC transmembrane type-1 domain is found at 34 to 320 (FLKLIRFSII…IMTSIYSIYN (287 aa)). The ABC transporter domain occupies 353–593 (VVFQNVSFIY…CPLYKKMDES (241 aa)). Position 387–394 (387–394 (GPNGSGKK)) interacts with ATP.

This sequence belongs to the ABC transporter superfamily.

Its subcellular location is the cell membrane. Its function is as follows. Probably implicated in the export process of the lantibiotic subtilin. In Bacillus subtilis, this protein is Subtilin transport ATP-binding protein SpaT (spaT).